We begin with the raw amino-acid sequence, 92 residues long: Small ribosomal subunit protein uS19 (92 aa).

This sequence belongs to the universal ribosomal protein uS19 family.

Protein S19 forms a complex with S13 that binds strongly to the 16S ribosomal RNA. The chain is Small ribosomal subunit protein uS19 from Clostridium botulinum (strain Eklund 17B / Type B).